Reading from the N-terminus, the 72-residue chain is MSKSDYIELEGVVKEKLPNTIFTVELENGHRILAHISGKIRKHYIRILPGDKVTVEMTPYDLTKGRIIFRHK.

The S1-like domain occupies 1-72 (MSKSDYIELE…TKGRIIFRHK (72 aa)).

The protein belongs to the IF-1 family. Component of the 30S ribosomal translation pre-initiation complex which assembles on the 30S ribosome in the order IF-2 and IF-3, IF-1 and N-formylmethionyl-tRNA(fMet); mRNA recruitment can occur at any time during PIC assembly.

The protein localises to the cytoplasm. One of the essential components for the initiation of protein synthesis. Stabilizes the binding of IF-2 and IF-3 on the 30S subunit to which N-formylmethionyl-tRNA(fMet) subsequently binds. Helps modulate mRNA selection, yielding the 30S pre-initiation complex (PIC). Upon addition of the 50S ribosomal subunit IF-1, IF-2 and IF-3 are released leaving the mature 70S translation initiation complex. The sequence is that of Translation initiation factor IF-1 from Ruthia magnifica subsp. Calyptogena magnifica.